The chain runs to 159 residues: Methyl-coenzyme M reductase operon protein D (159 aa).

As to quaternary structure, MCR is composed of three subunits: alpha, beta, and gamma. The function of proteins C and D is not known.

The polypeptide is Methyl-coenzyme M reductase operon protein D (mcrD) (Methanococcus voltae).